Consider the following 289-residue polypeptide: Type II methyltransferase M.MjaIII (289 aa).

S-adenosyl-L-methionine contacts are provided by W9, K13, D63, and D199.

It belongs to the N(4)/N(6)-methyltransferase family.

It carries out the reaction a 2'-deoxyadenosine in DNA + S-adenosyl-L-methionine = an N(6)-methyl-2'-deoxyadenosine in DNA + S-adenosyl-L-homocysteine + H(+). Its function is as follows. An alpha subtype methylase that recognizes the double-stranded sequence 5'-GATC-3', methylates A-2 on both strands, and protects the DNA from cleavage by the MjaIII endonuclease. The chain is Type II methyltransferase M.MjaIII (mjaIIIM) from Methanocaldococcus jannaschii (strain ATCC 43067 / DSM 2661 / JAL-1 / JCM 10045 / NBRC 100440) (Methanococcus jannaschii).